A 166-amino-acid chain; its full sequence is MNIQEIKDLMAQFDTSSLREFLFKTNEGELIFSKNEQHLNASISNQEHAVPVPQVQLVPNSTASEASSPASVKDVPVEEQPQAESFVAEGDIVESPLVGVAYLAASPDKPPFVAVGDTVKKGQTLVIIEAMKVMNEVPAPCDGVITEILVSNEDVIEFGQGLVRIK.

Polar residues predominate over residues 61 to 70 (STASEASSPA). Positions 61 to 82 (STASEASSPASVKDVPVEEQPQ) are disordered. The region spanning 90 to 166 (GDIVESPLVG…EFGQGLVRIK (77 aa)) is the Biotinyl-binding domain. Lys-132 is modified (N6-biotinyllysine).

In terms of assembly, homodimer.

The protein operates within lipid metabolism; fatty acid biosynthesis. Its function is as follows. This protein is a component of the acetyl coenzyme A carboxylase complex; first, biotin carboxylase catalyzes the carboxylation of the carrier protein and then the transcarboxylase transfers the carboxyl group to form malonyl-CoA. This is Biotin carboxyl carrier protein of acetyl-CoA carboxylase from Streptococcus pyogenes serotype M6 (strain ATCC BAA-946 / MGAS10394).